The sequence spans 486 residues: MVSEIKTLVTFFGGTGDLAKRKLYPSVFNLYKKGYLQKHFAIVGTARQALNDDEFKQLVRDSIKDFTDDQAQAEAFIEHFSYRAHDVTDAASYAVLKEAIEEAADKFDIDGNRIFYMSVAPRFFGTIAKYLKSEGLLADTGYNRLMIEKPFGTSYDTAAELQNDLENAFDDNQLFRIDHYLGKEMVQNIAALRFGNPIFDAAWNKDYIKNVQVTLSEVLGVEERAGYYDTAGALLDMIQNHTMQIVGWLAMEKPESFTDKDIRAAKNAAFNALKIYDEAEVNKYFVRAQYGAGDSADFKPYLEELDVPADSKNNTFIAGELQFDLPRWEGVPFYVRSGKRLAAKQTRVDIVFKAGTFNFGSEQEAQEAVLSIIIDPKGAIELKLNAKSVEDAFNTRTIDLGWTVSDEDKKNTPEPYERMIHDTMNGDGSNFADWNGVSIAWKFVDAISAVYTADKAPLETYKSGSMGPEASDKLLAANGDAWVFKG.

NADP(+)-binding positions include 13–20, Arg-47, 86–87, and Lys-149; these read GGTGDLAK and DV. His-179, Lys-183, Glu-217, and Asp-236 together coordinate substrate. His-241 (proton acceptor) is an active-site residue. Positions 339 and 344 each coordinate substrate.

It belongs to the glucose-6-phosphate dehydrogenase family. In terms of assembly, homodimer.

It catalyses the reaction D-glucose 6-phosphate + NAD(+) = 6-phospho-D-glucono-1,5-lactone + NADH + H(+). It carries out the reaction D-glucose 6-phosphate + NADP(+) = 6-phospho-D-glucono-1,5-lactone + NADPH + H(+). It functions in the pathway carbohydrate degradation; pentose phosphate pathway; D-ribulose 5-phosphate from D-glucose 6-phosphate (oxidative stage): step 1/3. Functionally, catalyzes the oxidation of glucose 6-phosphate to 6-phosphogluconolactone. Can utilize either NADP(+) or NAD(+). The sequence is that of Glucose-6-phosphate 1-dehydrogenase from Leuconostoc mesenteroides.